Reading from the N-terminus, the 285-residue chain is Ribosomal RNA small subunit methyltransferase H (285 aa).

S-adenosyl-L-methionine contacts are provided by residues 34-36, Asp-51, Phe-75, Asp-96, and His-103; that span reads AGH. The interval 258–285 is disordered; sequence PLVPSEKEAAQNPRARSAKLRAAEKEAP.

Belongs to the methyltransferase superfamily. RsmH family.

It localises to the cytoplasm. It catalyses the reaction cytidine(1402) in 16S rRNA + S-adenosyl-L-methionine = N(4)-methylcytidine(1402) in 16S rRNA + S-adenosyl-L-homocysteine + H(+). Functionally, specifically methylates the N4 position of cytidine in position 1402 (C1402) of 16S rRNA. The protein is Ribosomal RNA small subunit methyltransferase H of Thermus thermophilus (strain ATCC BAA-163 / DSM 7039 / HB27).